Reading from the N-terminus, the 232-residue chain is MKLSPIIVALDYSNPKKAISFSKKISPDQCQLKIGHELFINSGFFLINFLQKNGFKIFLDLKLYDIPNTIKKTIFSLAKFGIWMVNVHASGGYNMMTAAKDALSHINNPPKLIAVTVLTSMEKSDLSKSKIFTKIINHVIHLSNNAYKCGLDGIVCSPWEAEKVRKKFGNNFIIVTPGIRFKNTNYNDQKRVMNPYDAIKSGSNYIVIGRPITKSSNPYLLLEKILSKLNNI.

Substrate is bound by residues Asp-11, Lys-33, 60-69 (DLKLYDIPNT), Thr-119, Arg-180, Gln-189, Gly-209, and Arg-210. The active-site Proton donor is the Lys-62.

The protein belongs to the OMP decarboxylase family. Type 1 subfamily. As to quaternary structure, homodimer.

The enzyme catalyses orotidine 5'-phosphate + H(+) = UMP + CO2. It participates in pyrimidine metabolism; UMP biosynthesis via de novo pathway; UMP from orotate: step 2/2. In terms of biological role, catalyzes the decarboxylation of orotidine 5'-monophosphate (OMP) to uridine 5'-monophosphate (UMP). This Wigglesworthia glossinidia brevipalpis protein is Orotidine 5'-phosphate decarboxylase.